Here is a 150-residue protein sequence, read N- to C-terminus: UPF0178 protein Shew_2726 (150 aa).

The protein belongs to the UPF0178 family.

This Shewanella loihica (strain ATCC BAA-1088 / PV-4) protein is UPF0178 protein Shew_2726.